The primary structure comprises 234 residues: Large ribosomal subunit protein uL1 (234 aa).

It belongs to the universal ribosomal protein uL1 family. In terms of assembly, part of the 50S ribosomal subunit.

In terms of biological role, binds directly to 23S rRNA. The L1 stalk is quite mobile in the ribosome, and is involved in E site tRNA release. Functionally, protein L1 is also a translational repressor protein, it controls the translation of the L11 operon by binding to its mRNA. This Aliivibrio fischeri (strain MJ11) (Vibrio fischeri) protein is Large ribosomal subunit protein uL1.